The chain runs to 174 residues: Chorismate pyruvate-lyase (174 aa).

Substrate-binding residues include Met-36, Arg-78, Leu-116, and Glu-157.

This sequence belongs to the UbiC family. In terms of assembly, monomer.

It localises to the cytoplasm. The enzyme catalyses chorismate = 4-hydroxybenzoate + pyruvate. Its pathway is cofactor biosynthesis; ubiquinone biosynthesis. Removes the pyruvyl group from chorismate, with concomitant aromatization of the ring, to provide 4-hydroxybenzoate (4HB) for the ubiquinone pathway. The protein is Chorismate pyruvate-lyase of Serratia proteamaculans (strain 568).